A 112-amino-acid chain; its full sequence is Large ribosomal subunit protein uL22 (112 aa).

It belongs to the universal ribosomal protein uL22 family. As to quaternary structure, part of the 50S ribosomal subunit.

This protein binds specifically to 23S rRNA; its binding is stimulated by other ribosomal proteins, e.g. L4, L17, and L20. It is important during the early stages of 50S assembly. It makes multiple contacts with different domains of the 23S rRNA in the assembled 50S subunit and ribosome. Its function is as follows. The globular domain of the protein is located near the polypeptide exit tunnel on the outside of the subunit, while an extended beta-hairpin is found that lines the wall of the exit tunnel in the center of the 70S ribosome. This is Large ribosomal subunit protein uL22 from Anaplasma phagocytophilum (strain HZ).